Reading from the N-terminus, the 106-residue chain is Thiosulfate sulfurtransferase GlpE (106 aa).

Residues 17–105 enclose the Rhodanese domain; sequence EQSEAKLVDI…WQRAELPIVR (89 aa). The Cysteine persulfide intermediate role is filled by cysteine 65.

This sequence belongs to the GlpE family.

It localises to the cytoplasm. The catalysed reaction is thiosulfate + hydrogen cyanide = thiocyanate + sulfite + 2 H(+). The enzyme catalyses thiosulfate + [thioredoxin]-dithiol = [thioredoxin]-disulfide + hydrogen sulfide + sulfite + 2 H(+). Its function is as follows. Transferase that catalyzes the transfer of sulfur from thiosulfate to thiophilic acceptors such as cyanide or dithiols. May function in a CysM-independent thiosulfate assimilation pathway by catalyzing the conversion of thiosulfate to sulfite, which can then be used for L-cysteine biosynthesis. The chain is Thiosulfate sulfurtransferase GlpE from Vibrio campbellii (strain ATCC BAA-1116).